Consider the following 670-residue polypeptide: Probable Rho-GTPase-activating protein 9 (670 aa).

In terms of domain architecture, F-BAR spans 3-392; sequence DGFSNSFWSR…SFKNLDSLRD (390 aa). The interval 141–161 is disordered; it reads NSKKSNLTDRKPIPTSRKSNK. The 198-residue stretch at 425-622 folds into the Rho-GAP domain; sequence SSLTEDNLIV…DLINEFENLF (198 aa). T640 is subject to Phosphothreonine. The span at 641 to 663 shows a compositional bias: polar residues; that stretch reads PITTSPQKLKLPRSSSPCKNPSP. The segment at 641–670 is disordered; that stretch reads PITTSPQKLKLPRSSSPCKNPSPTRRFRPF. S645 carries the phosphoserine modification.

Its subcellular location is the cytoplasm. This Schizosaccharomyces pombe (strain 972 / ATCC 24843) (Fission yeast) protein is Probable Rho-GTPase-activating protein 9 (rga9).